Consider the following 232-residue polypeptide: uncharacterized protein (232 aa).

The signal sequence occupies residues 1–18 (MGILKSLFTLGKSFISQA). Residues 207 to 232 (AEAGIGGSNKSSAQDVLARLQRQQGE) are disordered.

It belongs to the PspA/Vipp/IM30 family.

This is an uncharacterized protein from Escherichia coli O6:H1 (strain CFT073 / ATCC 700928 / UPEC).